Here is a 220-residue protein sequence, read N- to C-terminus: MSNQETQVSSLPMPPERYIANYTDENIRRNRAPRPPPPPAQHEVYSMFGIQYNNDEMIRSLESQNIKRLIPIHFDRRKELKKLNHSLLVNFLDLIDFLILNPDSPRRTEKIDDISLLFVNMHHLLNEFRPHQARETLRVMMEMQKRQRVETAARFQKHLERVREIVNTAFSALPVLDDDDDSGGAKIKTEVDPLEANAAAKNDPSYQHDRMLCKLVDAIE.

Belongs to the Mediator complex subunit 7 family. Component of the Mediator complex. Interacts with MED21.

The protein resides in the nucleus. Functionally, component of the Mediator complex, a coactivator involved in the regulated transcription of nearly all RNA polymerase II-dependent genes. Mediator functions as a bridge to convey information from gene-specific regulatory proteins to the basal RNA polymerase II transcription machinery. Mediator is recruited to promoters by direct interactions with regulatory proteins and serves as a scaffold for the assembly of a functional preinitiation complex with RNA polymerase II and the general transcription factors. Required for activated transcription of the MtnA, MtnB and MtnD genes. The chain is Mediator of RNA polymerase II transcription subunit 7 (MED7) from Drosophila melanogaster (Fruit fly).